The following is a 76-amino-acid chain: Small ribosomal subunit protein bS18 (76 aa).

Belongs to the bacterial ribosomal protein bS18 family. Part of the 30S ribosomal subunit. Forms a tight heterodimer with protein bS6.

In terms of biological role, binds as a heterodimer with protein bS6 to the central domain of the 16S rRNA, where it helps stabilize the platform of the 30S subunit. The chain is Small ribosomal subunit protein bS18 from Nitrosomonas eutropha (strain DSM 101675 / C91 / Nm57).